Here is a 172-residue protein sequence, read N- to C-terminus: Translation initiation factor IF-3 (172 aa).

It belongs to the IF-3 family. Monomer.

The protein resides in the cytoplasm. In terms of biological role, IF-3 binds to the 30S ribosomal subunit and shifts the equilibrium between 70S ribosomes and their 50S and 30S subunits in favor of the free subunits, thus enhancing the availability of 30S subunits on which protein synthesis initiation begins. The protein is Translation initiation factor IF-3 of Bartonella tribocorum (strain CIP 105476 / IBS 506).